The chain runs to 428 residues: 26S proteasome regulatory subunit 6B homolog (428 aa).

M1 is modified (N-acetylmethionine). ATP is bound at residue 213–220 (GPPGTGKT). A Glycyl lysine isopeptide (Lys-Gly) (interchain with G-Cter in ubiquitin) cross-link involves residue K280.

It belongs to the AAA ATPase family. Post-translationally, N-acetylated by NAT3.

Its subcellular location is the cytoplasm. The protein localises to the nucleus. In terms of biological role, the 26S proteasome is involved in the ATP-dependent degradation of ubiquitinated proteins. The regulatory (or ATPase) complex confers ATP dependency and substrate specificity to the 26S complex. This is 26S proteasome regulatory subunit 6B homolog (RPT3) from Saccharomyces cerevisiae (strain ATCC 204508 / S288c) (Baker's yeast).